The following is a 129-amino-acid chain: D-ribose pyranase (129 aa).

Residue H20 is the Proton donor of the active site. Substrate is bound by residues D28, H96, and 118-120 (YAN).

Belongs to the RbsD / FucU family. RbsD subfamily. As to quaternary structure, homodecamer.

The protein resides in the cytoplasm. It catalyses the reaction beta-D-ribopyranose = beta-D-ribofuranose. Its pathway is carbohydrate metabolism; D-ribose degradation; D-ribose 5-phosphate from beta-D-ribopyranose: step 1/2. Functionally, catalyzes the interconversion of beta-pyran and beta-furan forms of D-ribose. The chain is D-ribose pyranase from Staphylococcus saprophyticus subsp. saprophyticus (strain ATCC 15305 / DSM 20229 / NCIMB 8711 / NCTC 7292 / S-41).